Consider the following 144-residue polypeptide: uncharacterized protein (144 aa).

Residues Asn-14 and Asn-15 are each glycosylated (N-linked (GlcNAc...) asparagine). Residues 90–110 form a helical membrane-spanning segment; the sequence is FSWFIFGLFIACLLLCITLVL. The disordered stretch occupies residues 120–144; the sequence is NKATEVVPSSNIDDEEKQLSLSDMI.

It localises to the membrane. This is an uncharacterized protein from Saccharomyces cerevisiae (strain ATCC 204508 / S288c) (Baker's yeast).